Consider the following 361-residue polypeptide: Hydroxymethylglutaryl-CoA synthase (361 aa).

E92 acts as the Proton donor/acceptor in catalysis. Residue C124 is the Acyl-thioester intermediate of the active site. 4 residues coordinate (3S)-3-hydroxy-3-methylglutaryl-CoA: C124, S165, T214, and H247. H247 functions as the Proton donor/acceptor in the catalytic mechanism. CoA is bound at residue K252. (3S)-3-hydroxy-3-methylglutaryl-CoA is bound by residues K256, N279, and S309.

Belongs to the thiolase-like superfamily. Archaeal HMG-CoA synthase family. As to quaternary structure, interacts with acetoacetyl-CoA thiolase that catalyzes the precedent step in the pathway and with a DUF35 protein. The acetoacetyl-CoA thiolase/HMG-CoA synthase complex channels the intermediate via a fused CoA-binding site, which allows for efficient coupling of the endergonic thiolase reaction with the exergonic HMGCS reaction.

It catalyses the reaction acetoacetyl-CoA + acetyl-CoA + H2O = (3S)-3-hydroxy-3-methylglutaryl-CoA + CoA + H(+). The protein operates within metabolic intermediate biosynthesis; (R)-mevalonate biosynthesis; (R)-mevalonate from acetyl-CoA: step 2/3. Functionally, catalyzes the condensation of acetyl-CoA with acetoacetyl-CoA to form 3-hydroxy-3-methylglutaryl-CoA (HMG-CoA). Functions in the mevalonate (MVA) pathway leading to isopentenyl diphosphate (IPP), a key precursor for the biosynthesis of isoprenoid compounds that are building blocks of archaeal membrane lipids. The protein is Hydroxymethylglutaryl-CoA synthase of Aeropyrum pernix (strain ATCC 700893 / DSM 11879 / JCM 9820 / NBRC 100138 / K1).